The chain runs to 218 residues: MPLDVKICGLSTRATCDAALAAGADMVGLVFFSASPRHVDLGTAADLARAAQGRASVVALTVDADDAQLAAIVETVRPDLLQLHGRESPARVAEIKRRFALPVMKALPIATRDDLAALPDYAAVADRILFDARAPKGATRPGGLGVAFDWTLLRDLELTLPFMVSGGLTLDNVADALRITRAGGVDISSGVESAPGVKDPELIRAFIRAARATERLSV.

This sequence belongs to the TrpF family.

It carries out the reaction N-(5-phospho-beta-D-ribosyl)anthranilate = 1-(2-carboxyphenylamino)-1-deoxy-D-ribulose 5-phosphate. It functions in the pathway amino-acid biosynthesis; L-tryptophan biosynthesis; L-tryptophan from chorismate: step 3/5. This Rhodopseudomonas palustris (strain BisA53) protein is N-(5'-phosphoribosyl)anthranilate isomerase.